Consider the following 2206-residue polypeptide: Genome polyprotein (2206 aa).

G2 carries N-myristoyl glycine; by host lipidation. Residues 2-1517 lie on the Cytoplasmic side of the membrane; it reads GAQVSSQKVG…NINRAMTILQ (1516 aa). 2 amphipathic alpha-helix regions span residues 579 to 599 and 579 to 603; these read GIED…LPKQ and GIED…QDSL. Active-site for protease 2A activity residues include H898 and D916. Residues C933 and C935 each coordinate Zn(2+). C987 functions as the For protease 2A activity in the catalytic mechanism. Residues C993 and H995 each coordinate Zn(2+). Residues 1125–1197 form a membrane-binding region; the sequence is GDSWLKKFTE…HQSCPSQEHQ (73 aa). Positions 1125-1263 are oligomerization; that stretch reads GDSWLKKFTE…SPGTGKSVAT (139 aa). Residues 1146–1150 form an RNA-binding region; sequence SNKIS. Residues 1229-1385 form the SF3 helicase domain; sequence EHTINNYIQF…GEYSRDGKLN (157 aa). 1253–1260 is an ATP binding site; the sequence is GSPGTGKS. The Zn(2+) site is built by C1393, C1396, C1405, and C1410. The segment at 1393-1410 adopts a C4-type zinc-finger fold; it reads CKDCHQPANFKRCCPLVC. Residues 1437–1444 form an RNA-binding region; the sequence is ERNRRSNI. The interval 1448-1453 is oligomerization; sequence MEALFQ. The stretch at 1518–1533 is an intramembrane region; sequence AVTTFAAVAGVVYVMY. Residues 1534 to 2206 lie on the Cytoplasmic side of the membrane; the sequence is KLFAGHQGAY…TLYRRWLDSF (673 aa). O-(5'-phospho-RNA)-tyrosine is present on Y1543. The region spanning 1563–1741 is the Peptidase C3 domain; it reads GPGFDYAVAM…FAAALKRSYF (179 aa). Residues H1602, E1633, and C1709 each act as for protease 3C activity in the active site. The region spanning 1972–2087 is the RdRp catalytic domain; sequence EKLFAFDYTG…SYPHEVDASL (116 aa). Residues D1978 and D2073 each contribute to the Mg(2+) site.

It belongs to the picornaviruses polyprotein family. As to quaternary structure, interacts with capsid protein VP1 and capsid protein VP3 to form heterotrimeric protomers. In terms of assembly, interacts with capsid protein VP0, and capsid protein VP3 to form heterotrimeric protomers. Interacts with human PVR. Five protomers subsequently associate to form pentamers which serve as building blocks for the capsid. Interacts with capsid protein VP2, capsid protein VP3 and capsid protein VP4 following cleavage of capsid protein VP0. Interacts with capsid protein VP1 and capsid protein VP3 in the mature capsid. As to quaternary structure, interacts with capsid protein VP0 and capsid protein VP1 to form heterotrimeric protomers. Five protomers subsequently associate to form pentamers which serve as building blocks for the capsid. Interacts with capsid protein VP4 in the mature capsid. Interacts with protein 2C; this interaction may be important for virion morphogenesis. In terms of assembly, interacts with capsid protein VP1 and capsid protein VP3. Homodimer. As to quaternary structure, homohexamer; forms a hexameric ring structure with 6-fold symmetry characteristic of AAA+ ATPases. Interacts (via N-terminus) with host RTN3 (via reticulon domain); this interaction is important for viral replication. Interacts with capsid protein VP3; this interaction may be important for virion morphogenesis. In terms of assembly, interacts with protein 3CD. Homodimer. Interacts with host GBF1. Interacts (via GOLD domain) with host ACBD3 (via GOLD domain); this interaction allows the formation of a viral protein 3A/ACBD3 heterotetramer with a 2:2 stoichiometry, which will stimulate the recruitment of host PI4KB in order to synthesize PI4P at the viral RNA replication sites. As to quaternary structure, interacts with RNA-directed RNA polymerase. In terms of assembly, interacts with protein 3AB and with RNA-directed RNA polymerase. Interacts with Viral protein genome-linked and with protein 3CD. Requires Mg(2+) as cofactor. Specific enzymatic cleavages in vivo by the viral proteases yield processing intermediates and the mature proteins. Post-translationally, myristoylation is required for the formation of pentamers during virus assembly. Further assembly of 12 pentamers and a molecule of genomic RNA generates the provirion. In terms of processing, during virion maturation, immature virions are rendered infectious following cleavage of VP0 into VP4 and VP2. This maturation seems to be an autocatalytic event triggered by the presence of RNA in the capsid and it is followed by a conformational change infectious virion. Myristoylation is required during RNA encapsidation and formation of the mature virus particle. Post-translationally, VPg is uridylylated by the polymerase into VPg-pUpU. This acts as a nucleotide-peptide primer for the genomic RNA replication.

The protein resides in the virion. It localises to the host cytoplasm. Its subcellular location is the host cytoplasmic vesicle membrane. It is found in the host nucleus. The catalysed reaction is a ribonucleoside 5'-triphosphate + H2O = a ribonucleoside 5'-diphosphate + phosphate + H(+). It catalyses the reaction Selective cleavage of Tyr-|-Gly bond in the picornavirus polyprotein.. It carries out the reaction RNA(n) + a ribonucleoside 5'-triphosphate = RNA(n+1) + diphosphate. The enzyme catalyses Selective cleavage of Gln-|-Gly bond in the poliovirus polyprotein. In other picornavirus reactions Glu may be substituted for Gln, and Ser or Thr for Gly.. Replication or transcription is subject to high level of random mutations by the nucleotide analog ribavirin. In terms of biological role, forms an icosahedral capsid of pseudo T=3 symmetry with capsid proteins VP2 and VP3. The capsid is 300 Angstroms in diameter, composed of 60 copies of each capsid protein and enclosing the viral positive strand RNA genome. Capsid protein VP1 mainly forms the vertices of the capsid. Capsid protein VP1 interacts with host cell receptor PVR to provide virion attachment to target host cells. This attachment induces virion internalization predominantly through clathrin- and caveolin-independent endocytosis in Hela cells and through caveolin-mediated endocytosis in brain microvascular endothelial cells. Tyrosine kinases are probably involved in the entry process. Virus binding to PVR induces increased junctional permeability and rearrangement of junctional proteins. Modulation of endothelial tight junctions, as well as cytolytic infection of endothelial cells themselves, may result in loss of endothelial integrity which may help the virus to reach the CNS. After binding to its receptor, the capsid undergoes conformational changes. Capsid protein VP1 N-terminus (that contains an amphipathic alpha-helix) and capsid protein VP4 are externalized. Together, they shape a pore in the host membrane through which viral genome is translocated to host cell cytoplasm. Its function is as follows. Forms an icosahedral capsid of pseudo T=3 symmetry with capsid proteins VP2 and VP3. The capsid is 300 Angstroms in diameter, composed of 60 copies of each capsid protein and enclosing the viral positive strand RNA genome. Functionally, lies on the inner surface of the capsid shell. After binding to the host receptor, the capsid undergoes conformational changes. Capsid protein VP4 is released, Capsid protein VP1 N-terminus is externalized, and together, they shape a pore in the host membrane through which the viral genome is translocated into the host cell cytoplasm. Component of immature procapsids, which is cleaved into capsid proteins VP4 and VP2 after maturation. Allows the capsid to remain inactive before the maturation step. In terms of biological role, cysteine protease that cleaves viral polyprotein and specific host proteins. It is responsible for the autocatalytic cleavage between the P1 and P2 regions, which is the first cleavage occurring in the polyprotein. Also cleaves the host translation initiation factor EIF4G1, in order to shut down the capped cellular mRNA translation. Inhibits the host nucleus-cytoplasm protein and RNA trafficking by cleaving host members of the nuclear pores including NUP98, NUP62 and NUP153. Counteracts stress granule formation probably by antagonizing its assembly or promoting its dissassembly. Cleaves and inhibits host IFIH1/MDA5, thereby inhibiting the type-I IFN production and the establishment of the antiviral state. Cleaves and inhibits host MAVS, thereby inhibiting the type-I IFN production and the establishment of the antiviral state. Its function is as follows. Plays an essential role in the virus replication cycle by acting as a viroporin. Creates a pore in the host endoplasmic reticulum and as a consequence releases Ca2+ in the cytoplasm of infected cell. In turn, high levels of cytoplasmic calcium may trigger membrane trafficking and transport of viral ER-associated proteins to viroplasms, sites of viral genome replication. Functionally, induces and associates with structural rearrangements of intracellular membranes. Displays RNA-binding, nucleotide binding and NTPase activities. May play a role in virion morphogenesis and viral RNA encapsidation by interacting with the capsid protein VP3. Localizes the viral replication complex to the surface of membranous vesicles. Together with protein 3CD binds the Cis-Active RNA Element (CRE) which is involved in RNA synthesis initiation. Acts as a cofactor to stimulate the activity of 3D polymerase, maybe through a nucleid acid chaperone activity. In terms of biological role, localizes the viral replication complex to the surface of membranous vesicles. It inhibits host cell endoplasmic reticulum-to-Golgi apparatus transport and causes the disassembly of the Golgi complex, possibly through GBF1 interaction. This would result in depletion of MHC, trail receptors and IFN receptors at the host cell surface. Plays an essential role in viral RNA replication by recruiting ACBD3 and PI4KB at the viral replication sites, thereby allowing the formation of the rearranged membranous structures where viral replication takes place. Its function is as follows. Acts as a primer for viral RNA replication and remains covalently bound to viral genomic RNA. VPg is uridylylated prior to priming replication into VPg-pUpU. The oriI viral genomic sequence may act as a template for this. The VPg-pUpU is then used as primer on the genomic RNA poly(A) by the RNA-dependent RNA polymerase to replicate the viral genome. During genome replication, the VPg-RNA linkage is removed by the host TDP2, thereby accelerating replication. During the late stage of the replication cycle, host TDP2 is excluded from sites of viral RNA synthesis and encapsidation, allowing for the generation of progeny virions. Functionally, involved in the viral replication complex and viral polypeptide maturation. It exhibits protease activity with a specificity and catalytic efficiency that is different from protease 3C. Protein 3CD lacks polymerase activity. Protein 3CD binds to the 5'UTR of the viral genome. Major viral protease that mediates proteolytic processing of the polyprotein. Cleaves host EIF5B, contributing to host translation shutoff. Also cleaves host PABPC1, contributing to host translation shutoff. Cleaves host RIGI and thus contributes to the inhibition of type I interferon production. Cleaves host NLRP1, triggers host N-glycine-mediated degradation of the autoinhibitory NLRP1 N-terminal fragment. Inhibits the integrated stress response (ISR) in the infected cell by cleaving host G3BP1. Stress granule formation is thus inhibited, which allows protein synthesis and viral replication. In terms of biological role, replicates the viral genomic RNA on the surface of intracellular membranes. May form linear arrays of subunits that propagate along a strong head-to-tail interaction called interface-I. Covalently attaches UMP to a tyrosine of VPg, which is used to prime RNA synthesis. The positive stranded RNA genome is first replicated at virus induced membranous vesicles, creating a dsRNA genomic replication form. This dsRNA is then used as template to synthesize positive stranded RNA genomes. ss(+)RNA genomes are either translated, replicated or encapsidated. This chain is Genome polyprotein, found in Poliovirus type 3 (strains P3/Leon/37 and P3/Leon 12A[1]B).